The following is a 147-amino-acid chain: Large ribosomal subunit protein bL9 (147 aa).

Belongs to the bacterial ribosomal protein bL9 family.

Binds to the 23S rRNA. The chain is Large ribosomal subunit protein bL9 from Thermodesulfovibrio yellowstonii (strain ATCC 51303 / DSM 11347 / YP87).